The chain runs to 359 residues: 5-formaminoimidazole-4-carboxamide-1-(beta)-D-ribofuranosyl 5'-monophosphate synthetase (359 aa).

His-27 and Ser-94 together coordinate 5-amino-1-(5-phospho-beta-D-ribosyl)imidazole-4-carboxamide. The ATP-grasp domain occupies 116–340 (RRLLRWESER…FGEIVTMGRR (225 aa)). ATP-binding positions include 146–208 (PEDI…TNFC) and Glu-230. Position 258 (Asn-258) interacts with 5-amino-1-(5-phospho-beta-D-ribosyl)imidazole-4-carboxamide. Mg(2+) contacts are provided by Gln-297 and Glu-310.

It belongs to the phosphohexose mutase family. The cofactor is Mg(2+). It depends on Mn(2+) as a cofactor.

The catalysed reaction is 5-amino-1-(5-phospho-beta-D-ribosyl)imidazole-4-carboxamide + formate + ATP = 5-formamido-1-(5-phospho-D-ribosyl)imidazole-4-carboxamide + ADP + phosphate. It functions in the pathway purine metabolism; IMP biosynthesis via de novo pathway; 5-formamido-1-(5-phospho-D-ribosyl)imidazole-4-carboxamide from 5-amino-1-(5-phospho-D-ribosyl)imidazole-4-carboxamide (formate route): step 1/1. Catalyzes the ATP- and formate-dependent formylation of 5-aminoimidazole-4-carboxamide-1-beta-d-ribofuranosyl 5'-monophosphate (AICAR) to 5-formaminoimidazole-4-carboxamide-1-beta-d-ribofuranosyl 5'-monophosphate (FAICAR) in the absence of folates. The protein is 5-formaminoimidazole-4-carboxamide-1-(beta)-D-ribofuranosyl 5'-monophosphate synthetase of Methanopyrus kandleri (strain AV19 / DSM 6324 / JCM 9639 / NBRC 100938).